The following is a 424-amino-acid chain: C4-dicarboxylate transport protein (424 aa).

8 consecutive transmembrane segments (helical) span residues 4–24, 44–64, 76–96, 142–162, 184–206, 222–242, 326–346, and 352–372; these read SLFKSLYFQVLAAIAIGVLLG, LIKMIIAPVIFCTVVSGIAGM, VALIYFEVVSTIALIIGLVVV, IGAFASGNILQVLLFAILFGF, VFFGIINMIMRLAPVGAFGAMAF, LIVCFYITCLLFVVVVLGLIA, IWHQITLLVVLLLSSKGAAGV, and IVLAATLSAVGHLPVAGLALI.

The protein belongs to the dicarboxylate/amino acid:cation symporter (DAACS) (TC 2.A.23) family.

It localises to the cell inner membrane. In terms of biological role, responsible for the transport of dicarboxylates such as succinate, fumarate, and malate from the periplasm across the membrane. The chain is C4-dicarboxylate transport protein from Erwinia tasmaniensis (strain DSM 17950 / CFBP 7177 / CIP 109463 / NCPPB 4357 / Et1/99).